A 467-amino-acid polypeptide reads, in one-letter code: Fumarate hydratase class II (467 aa).

Residues 99–101 (SGT), 130–133 (HPND), 140–142 (SSN), and Thr188 each bind substrate. The Proton donor/acceptor role is filled by His189. Ser319 is a catalytic residue. Substrate-binding positions include Ser320 and 325–327 (KVN).

This sequence belongs to the class-II fumarase/aspartase family. Fumarase subfamily. In terms of assembly, homotetramer.

It is found in the cytoplasm. It catalyses the reaction (S)-malate = fumarate + H2O. It functions in the pathway carbohydrate metabolism; tricarboxylic acid cycle; (S)-malate from fumarate: step 1/1. In terms of biological role, involved in the TCA cycle. Catalyzes the stereospecific interconversion of fumarate to L-malate. This Thermosynechococcus vestitus (strain NIES-2133 / IAM M-273 / BP-1) protein is Fumarate hydratase class II.